The following is a 252-amino-acid chain: MAQRKMIVFPTKNELSEAMAEYTANLSAKFIKEKGLFTVVLSGGDLIDWLCKLVQPPYIDSIEWPKWHVFWVDERVCAWEDPDSNYKLAMEGFLSKVPIPDKNIYAIDKHLAADGNAEHCATLYEECLKNLVKEKIIPISKKTGYPEFDLQLLGMGPDGHMASLFPNHPQINEKQKWVTYITDSPKPPPKRITFTLPVINSTLYNLMAICDKAPAKSVAEIMKHNNLSLPSAHLSAQVENVWYLDQAAASEL.

It belongs to the glucosamine/galactosamine-6-phosphate isomerase family. 6-phosphogluconolactonase subfamily.

It is found in the cytoplasm. Its subcellular location is the cytosol. It catalyses the reaction 6-phospho-D-glucono-1,5-lactone + H2O = 6-phospho-D-gluconate + H(+). Its pathway is carbohydrate degradation; pentose phosphate pathway; D-ribulose 5-phosphate from D-glucose 6-phosphate (oxidative stage): step 2/3. Functionally, catalyzes the hydrolysis of 6-phosphogluconolactone to 6-phosphogluconate. In Arabidopsis thaliana (Mouse-ear cress), this protein is Probable 6-phosphogluconolactonase 5.